Here is a 95-residue protein sequence, read N- to C-terminus: Citrate lyase acyl carrier protein (95 aa).

Ser-14 carries the O-(phosphoribosyl dephospho-coenzyme A)serine modification.

The protein belongs to the CitD family. As to quaternary structure, oligomer with a subunit composition of (alpha,beta,gamma)6.

It localises to the cytoplasm. Its function is as follows. Covalent carrier of the coenzyme of citrate lyase. This chain is Citrate lyase acyl carrier protein, found in Haemophilus influenzae (strain PittEE).